The chain runs to 122 residues: Small ribosomal subunit protein uS13 (122 aa).

The tract at residues 93–122 is disordered; it reads RLSLPVRGQRTKTNSRTRKGKRKTVAGKKK. Positions 101-122 are enriched in basic residues; that stretch reads QRTKTNSRTRKGKRKTVAGKKK.

This sequence belongs to the universal ribosomal protein uS13 family. As to quaternary structure, part of the 30S ribosomal subunit. Forms a loose heterodimer with protein S19. Forms two bridges to the 50S subunit in the 70S ribosome.

In terms of biological role, located at the top of the head of the 30S subunit, it contacts several helices of the 16S rRNA. In the 70S ribosome it contacts the 23S rRNA (bridge B1a) and protein L5 of the 50S subunit (bridge B1b), connecting the 2 subunits; these bridges are implicated in subunit movement. Contacts the tRNAs in the A and P-sites. The chain is Small ribosomal subunit protein uS13 from Chlamydia abortus (strain DSM 27085 / S26/3) (Chlamydophila abortus).